Here is a 92-residue protein sequence, read N- to C-terminus: UPF0250 protein XF_1271 (92 aa).

The protein belongs to the UPF0250 family.

The polypeptide is UPF0250 protein XF_1271 (Xylella fastidiosa (strain 9a5c)).